The following is a 163-amino-acid chain: MSSIPISVEGFKQLEKELDRLKKERPGVIQAIKEAREEGDLSENAGYDAARERQGMLEARIKYIESRMAQFNVIDLDTISGDKVMFGATVKIEDLESGEEKEYTLLGPDEADYAKGSISVQSPVARAMLGKEEGDEIVVDAPRGKIHYEIVSIRFLGTKGQQR.

Residues 11–38 are a coiled coil; it reads FKQLEKELDRLKKERPGVIQAIKEAREE.

This sequence belongs to the GreA/GreB family.

Its function is as follows. Necessary for efficient RNA polymerase transcription elongation past template-encoded arresting sites. The arresting sites in DNA have the property of trapping a certain fraction of elongating RNA polymerases that pass through, resulting in locked ternary complexes. Cleavage of the nascent transcript by cleavage factors such as GreA or GreB allows the resumption of elongation from the new 3'terminus. GreA releases sequences of 2 to 3 nucleotides. This Nitratidesulfovibrio vulgaris (strain ATCC 29579 / DSM 644 / CCUG 34227 / NCIMB 8303 / VKM B-1760 / Hildenborough) (Desulfovibrio vulgaris) protein is Transcription elongation factor GreA.